A 534-amino-acid polypeptide reads, in one-letter code: Inosine-5'-monophosphate dehydrogenase (534 aa).

CBS domains are found at residues 117–181 (YVMQ…GTPI) and 190–255 (TTPI…PMAS). NAD(+) is bound by residues 292–294 (DSS) and 342–344 (GMG). K(+)-binding residues include Gly344 and Gly346. Position 347 (Ser347) interacts with IMP. A K(+)-binding site is contributed by Cys349. Catalysis depends on Cys349, which acts as the Thioimidate intermediate. Residues 382–384 (DGG), 405–406 (GG), and 430–434 (YRGMG) contribute to the IMP site. The active-site Proton acceptor is the Arg448. Gln461 is an IMP binding site. Residues Glu520, Gly521, and Gly522 each coordinate K(+).

This sequence belongs to the IMPDH/GMPR family. In terms of assembly, homotetramer. It depends on K(+) as a cofactor.

It localises to the cytoplasm. The enzyme catalyses IMP + NAD(+) + H2O = XMP + NADH + H(+). The protein operates within purine metabolism; XMP biosynthesis via de novo pathway; XMP from IMP: step 1/1. Mycophenolic acid (MPA) is a non-competitive inhibitor that prevents formation of the closed enzyme conformation by binding to the same site as the amobile flap. In contrast, mizoribine monophosphate (MZP) is a competitive inhibitor that induces the closed conformation. MPA is a potent inhibitor of mammalian IMPDHs but a poor inhibitor of the bacterial enzymes. MZP is a more potent inhibitor of bacterial IMPDH. Functionally, catalyzes the conversion of inosine 5'-phosphate (IMP) to xanthosine 5'-phosphate (XMP), the first committed and rate-limiting step in the de novo synthesis of guanine nucleotides, and therefore plays an important role in the regulation of cell growth. This chain is Inosine-5'-monophosphate dehydrogenase, found in Caenorhabditis elegans.